The following is a 162-amino-acid chain: ATP synthase subunit b (162 aa).

A helical transmembrane segment spans residues 6–28 (LVTFVLTIVNILVLFYLLKRFLF).

This sequence belongs to the ATPase B chain family. F-type ATPases have 2 components, F(1) - the catalytic core - and F(0) - the membrane proton channel. F(1) has five subunits: alpha(3), beta(3), gamma(1), delta(1), epsilon(1). F(0) has three main subunits: a(1), b(2) and c(10-14). The alpha and beta chains form an alternating ring which encloses part of the gamma chain. F(1) is attached to F(0) by a central stalk formed by the gamma and epsilon chains, while a peripheral stalk is formed by the delta and b chains.

Its subcellular location is the cell membrane. Functionally, f(1)F(0) ATP synthase produces ATP from ADP in the presence of a proton or sodium gradient. F-type ATPases consist of two structural domains, F(1) containing the extramembraneous catalytic core and F(0) containing the membrane proton channel, linked together by a central stalk and a peripheral stalk. During catalysis, ATP synthesis in the catalytic domain of F(1) is coupled via a rotary mechanism of the central stalk subunits to proton translocation. In terms of biological role, component of the F(0) channel, it forms part of the peripheral stalk, linking F(1) to F(0). This is ATP synthase subunit b from Natranaerobius thermophilus (strain ATCC BAA-1301 / DSM 18059 / JW/NM-WN-LF).